We begin with the raw amino-acid sequence, 592 residues long: A-type ATP synthase subunit A (592 aa).

An ATP-binding site is contributed by 236–243 (GPFGSGKT).

This sequence belongs to the ATPase alpha/beta chains family. As to quaternary structure, has multiple subunits with at least A(3), B(3), C, D, E, F, H, I and proteolipid K(x).

It localises to the cell membrane. It carries out the reaction ATP + H2O + 4 H(+)(in) = ADP + phosphate + 5 H(+)(out). Functionally, component of the A-type ATP synthase that produces ATP from ADP in the presence of a proton gradient across the membrane. The A chain is the catalytic subunit. The polypeptide is A-type ATP synthase subunit A (Methanopyrus kandleri (strain AV19 / DSM 6324 / JCM 9639 / NBRC 100938)).